Consider the following 122-residue polypeptide: MTSTVEFINRWQRIALLSQSLLELAQRGEWELLLQQEVSYLQSIETVMEKQTPPGITRSIQDMVAGYIKQTLDNEQRLKGLLQQRLDELSGLIGQSTRQKSLNNAYGRLSGMLLVPDAPGAS.

The interval 1 to 50 (MTSTVEFINRWQRIALLSQSLLELAQRGEWELLLQQEVSYLQSIETVMEK) is required for homodimerization. Residues 60–98 (IQDMVAGYIKQTLDNEQRLKGLLQQRLDELSGLIGQSTR) form a fliD binding region.

It belongs to the FliT family. Homodimer. Interacts with FliD and FlhC.

It localises to the cytoplasm. Its subcellular location is the cytosol. Dual-function protein that regulates the transcription of class 2 flagellar operons and that also acts as an export chaperone for the filament-capping protein FliD. As a transcriptional regulator, acts as an anti-FlhDC factor; it directly binds FlhC, thus inhibiting the binding of the FlhC/FlhD complex to class 2 promoters, resulting in decreased expression of class 2 flagellar operons. As a chaperone, effects FliD transition to the membrane by preventing its premature polymerization, and by directing it to the export apparatus. This Salmonella arizonae (strain ATCC BAA-731 / CDC346-86 / RSK2980) protein is Flagellar protein FliT.